The chain runs to 346 residues: tRNA N6-adenosine threonylcarbamoyltransferase (346 aa).

Fe cation contacts are provided by H109, H113, and Y135. Residues 135 to 139, D167, G180, E184, and N263 each bind substrate; that span reads YVSGG. D291 is a Fe cation binding site.

It belongs to the KAE1 / TsaD family. As to quaternary structure, monomer. Component of the KEOPS complex that consists of Kae1, Bud32, Cgi121 and Pcc1; the whole complex dimerizes. The cofactor is Fe(2+).

The protein resides in the cytoplasm. It catalyses the reaction L-threonylcarbamoyladenylate + adenosine(37) in tRNA = N(6)-L-threonylcarbamoyladenosine(37) in tRNA + AMP + H(+). Required for the formation of a threonylcarbamoyl group on adenosine at position 37 (t(6)A37) in tRNAs that read codons beginning with adenine. Is a component of the KEOPS complex that is probably involved in the transfer of the threonylcarbamoyl moiety of threonylcarbamoyl-AMP (TC-AMP) to the N6 group of A37. Kae1 likely plays a direct catalytic role in this reaction, but requires other protein(s) of the complex to fulfill this activity. This Methanopyrus kandleri (strain AV19 / DSM 6324 / JCM 9639 / NBRC 100938) protein is tRNA N6-adenosine threonylcarbamoyltransferase.